Consider the following 414-residue polypeptide: Aspartic protease-like protein pynH (414 aa).

Residues 1–19 (MFPCSRIWSLLVAAATASA) form the signal peptide. Residues 43–410 (FLTDIALGTP…DFEKLQVGIA (368 aa)) enclose the Peptidase A1 domain. 11 N-linked (GlcNAc...) asparagine glycosylation sites follow: asparagine 93, asparagine 102, asparagine 140, asparagine 151, asparagine 173, asparagine 202, asparagine 221, asparagine 258, asparagine 272, asparagine 335, and asparagine 366. Cysteine 333 and cysteine 371 are joined by a disulfide.

It belongs to the peptidase A1 family.

The protein operates within secondary metabolite biosynthesis. Its function is as follows. Aspartic protease-like protein; part of the gene cluster that mediates the biosynthesis of pyranonigrins, a family of antioxidative compounds. The first step of pyranonigrins biosynthesis is performed by the hybrid PKS-NRPS synthetase that condenses 6 malonyl-CoA units to an acetyl starter unit, to form a 1,3,5-trioxotetradecane-6,8-dienyl-ACP. The enoyl reductase (ER) domain of pynA is likely to be functional during the first two rounds of polyketide chain extension, to generate the saturated C-C bonds of the alkyl side chain. PynA subsequently forms the amide bond between the acyl chain and L-serine. Although pynA has a terminal reductase domain, it appears to require the thioesterase pynI for the release of the straight-chain intermediate from pynA via the formation of a tetramic acid pyranonigrin J. The methyltransferase pynC then coverts pyranonigrin J to pyranonigrin I via N-methylation. The FAD-dependent monooxygenase pynG catalyzes an epoxidation-mediated cyclization to form the dihydro-gamma-pyrone moiety, followed by pynD-catalyzed oxidation of the alcohol to the ketone and enolization to yield the characteristic tetramic acid-fused gamma-pyrone core of pyranonigrin H. Pyranonigrin H is substrate of pynH for dehydration-mediated exo-methylene formation from the serine side chain to produce pyranonigrin E, before the oxidase pynE reduces the exo-methylene of pyranonigrin E into a pendant methyl to form pyranonigrin G. The FAD-linked oxidoreductase pynB performs the reverse reaction and converts pyranonigrin G back to pyranonigrin E. The sequence is that of Aspartic protease-like protein pynH from Aspergillus niger (strain ATCC MYA-4892 / CBS 513.88 / FGSC A1513).